The following is a 205-amino-acid chain: Ras-related protein Rab-1A (205 aa).

Residues 18–26 (GDSGVGKSC), 36–43 (YTESYIST), 66–70 (DTAGQ), 124–127 (NKSD), and 154–156 (SAK) contribute to the GTP site. Residues 40–48 (YISTIGVDF) carry the Effector region motif. Polar residues predominate over residues 183–198 (SDSKPSVKINSSTPVS). Residues 183-205 (SDSKPSVKINSSTPVSANKGGCC) form a disordered region. S-geranylgeranyl cysteine attachment occurs at residues cysteine 204 and cysteine 205.

It belongs to the small GTPase superfamily. Rab family.

Its subcellular location is the golgi apparatus. The protein resides in the endoplasmic reticulum. Functionally, probably required for transit of protein from the ER through Golgi compartment. This Lymnaea stagnalis (Great pond snail) protein is Ras-related protein Rab-1A (RAB1A).